The following is a 281-amino-acid chain: 32 kDa heat shock protein (281 aa).

A compositionally biased stretch (acidic residues) spans E142–I168. The interval E142 to N281 is disordered. The segment covering K180–V209 has biased composition (basic and acidic residues). Residues K210–E273 are compositionally biased toward low complexity.

This Dictyostelium discoideum (Social amoeba) protein is 32 kDa heat shock protein (hspC).